The primary structure comprises 378 residues: MNALKTTHDAKAPIVAFDMTPATLRELGLQESDVPEVHAVAQRIEVGSPQTVAEFGRDVAEHTSRYADSLLDQVRNSDLDEAGEKLTQVVAKARSLNVGPLSDNRSRLPLIGPLIDRFRVRSTGFMARFDTTREQIEHLVSEVQTTQQGIAQRNASLDEMFAAVREEHRLLGVHIAAGKVRLAELREQAEGLRGNVGNDPGRVQELADLDAMVANLDKRIGDLIALQHSAMQSLPTIRMIQANNQMLVDKFHTIREITVPAWKRQFMLALSLNEQKNAVELATAIDDTTNDLMKRNAALLHRTSVETAKENQRLVIDVDTLKQVQTTLIKTVEDVIRIQQEGVQKRKDAEKQIAAMRGDLQAKLTRQPVRELAQQESV.

Belongs to the TelA family.

Its function is as follows. Belongs to the kla operon, which is associated with cryptic tellurite resistance, and IncW plasmid fertility inhibition. The protein is Protein KlaB (klaB) of Escherichia coli.